We begin with the raw amino-acid sequence, 185 residues long: MSSLRIYNDNDFSQPLVFTEDGAEISRQLNEAGIRFERWSTRELDEGATPDSILAAYQEEVEKLKAENGFTTADVVSLTPAHPQKDEFRKKFLDEHRHSEDEVRFFVRGQGLFYLHLEDKVYVVLCRKNDLISVPNGTKHWFDMGPEPEFTCVRLFTNPEGWVAQFTGDEIASKAPRFEQLIEEA.

Positions 96, 98, 102, and 140 each coordinate Fe(2+). Ni(2+) is bound by residues His-96, His-98, Glu-102, and His-140.

This sequence belongs to the acireductone dioxygenase (ARD) family. As to quaternary structure, monomer. Fe(2+) is required as a cofactor. The cofactor is Ni(2+).

The enzyme catalyses 1,2-dihydroxy-5-(methylsulfanyl)pent-1-en-3-one + O2 = 3-(methylsulfanyl)propanoate + CO + formate + 2 H(+). The catalysed reaction is 1,2-dihydroxy-5-(methylsulfanyl)pent-1-en-3-one + O2 = 4-methylsulfanyl-2-oxobutanoate + formate + 2 H(+). It functions in the pathway amino-acid biosynthesis; L-methionine biosynthesis via salvage pathway; L-methionine from S-methyl-5-thio-alpha-D-ribose 1-phosphate: step 5/6. Functionally, catalyzes 2 different reactions between oxygen and the acireductone 1,2-dihydroxy-3-keto-5-methylthiopentene (DHK-MTPene) depending upon the metal bound in the active site. Fe-containing acireductone dioxygenase (Fe-ARD) produces formate and 2-keto-4-methylthiobutyrate (KMTB), the alpha-ketoacid precursor of methionine in the methionine recycle pathway. Ni-containing acireductone dioxygenase (Ni-ARD) produces methylthiopropionate, carbon monoxide and formate, and does not lie on the methionine recycle pathway. The sequence is that of Acireductone dioxygenase from Hahella chejuensis (strain KCTC 2396).